The primary structure comprises 127 residues: Fluoride-specific ion channel FluC (127 aa).

4 helical membrane passes run 4–24 (LLLA…LLSM), 35–55 (LGTL…FAWF), 71–91 (TGFC…VFLL), and 103–123 (VFVN…LFSA). G75 and T78 together coordinate Na(+).

The protein belongs to the fluoride channel Fluc/FEX (TC 1.A.43) family.

Its subcellular location is the cell inner membrane. The catalysed reaction is fluoride(in) = fluoride(out). Its activity is regulated as follows. Na(+) is not transported, but it plays an essential structural role and its presence is essential for fluoride channel function. In terms of biological role, fluoride-specific ion channel. Important for reducing fluoride concentration in the cell, thus reducing its toxicity. In Escherichia coli O7:K1 (strain IAI39 / ExPEC), this protein is Fluoride-specific ion channel FluC.